Reading from the N-terminus, the 210-residue chain is MRKRQQSQNEGTQAVSQAPGNQRPNNTCCFCWCCCCSCSCLTVRNEERGDSSGRSPHTTKMESIQVLEECQNPTADEVLSWSQNFDKMMKTPAGRNLFREFLRTEYSEENLLFWLACEDLKKEQNKKAVEEKARMIYEDYISILSPKEVSLDSRVREVINRSLLDPSPHMYEDAQLQIYTLMHRDSFPRFLNSQIYKAFVESTTSCTSES.

The interval Met-1–Asn-21 is disordered. Positions Asn-84–Val-200 constitute an RGS domain. Tyr-137 bears the Phosphotyrosine mark.

As to quaternary structure, interacts with GNAI1 and GNAQ. Interacts with GNAZ and GNAI2. Interacts with OPRM1. Forms a complex with mu-opioid receptors and G(alpha)z/i2 subunits, including GNAZ and GNAI2; the formation of this complex results in mu-opioid receptor desensitization. Interacts with HINT1. Post-translationally, N- and O-glycosylated in synapsomal membranes. Serine phosphorylated in synapsomal membranes. In terms of processing, sumoylated with SUMO1 and SUM02 in synaptosomes. The sumoylated forms act as a scaffold for sequestering mu-opioid receptor-activated G(alpha) subunits. Desumoylated by HINT1. Detected in brain (at protein level). Highly expressed in the hypothalamus, periaqueductal gray matter, and pons-medulla. Lower levels in the thalamus, cortex and spinal cord. Weak expression in the striatum and cerebellum.

It localises to the membrane. The protein localises to the synapse. Its subcellular location is the synaptosome. The protein resides in the nucleus. It is found in the cytoplasm. Functionally, regulates G protein-coupled receptor signaling cascades, including signaling via muscarinic acetylcholine receptor CHRM2 and dopamine receptor DRD2. Inhibits signal transduction by increasing the GTPase activity of G protein alpha subunits, thereby driving them into their inactive GDP-bound form. Binds selectively to GNAZ and GNAI2 subunits, accelerates their GTPase activity and regulates their signaling activities. Negatively regulates mu-opioid receptor-mediated activation of the G-proteins. This is Regulator of G-protein signaling 17 (Rgs17) from Mus musculus (Mouse).